The chain runs to 474 residues: Glycogen synthase (474 aa).

ADP-alpha-D-glucose is bound at residue K12.

This sequence belongs to the glycosyltransferase 1 family. Bacterial/plant glycogen synthase subfamily.

It carries out the reaction [(1-&gt;4)-alpha-D-glucosyl](n) + ADP-alpha-D-glucose = [(1-&gt;4)-alpha-D-glucosyl](n+1) + ADP + H(+). Its pathway is glycan biosynthesis; glycogen biosynthesis. Its function is as follows. Synthesizes alpha-1,4-glucan chains using ADP-glucose. In Xanthomonas axonopodis pv. citri (strain 306), this protein is Glycogen synthase.